Reading from the N-terminus, the 313-residue chain is Sideroflexin-4 (313 aa).

The next 5 membrane-spanning stretches (helical) occupy residues 87–107 (AALL…VKSL), 141–161 (LLLG…PRLL), 175–191 (FIPV…NVIA), 230–247 (VVLF…AYFF), and 269–289 (VLVM…IGRI).

It belongs to the sideroflexin family.

The protein localises to the mitochondrion inner membrane. Functionally, mitochondrial amino-acid transporter. Does not act as a serine transporter: not able to mediate transport of serine into mitochondria. This chain is Sideroflexin-4, found in Bos taurus (Bovine).